Consider the following 689-residue polypeptide: Glycine--tRNA ligase beta subunit (689 aa).

It belongs to the class-II aminoacyl-tRNA synthetase family. Tetramer of two alpha and two beta subunits.

Its subcellular location is the cytoplasm. The enzyme catalyses tRNA(Gly) + glycine + ATP = glycyl-tRNA(Gly) + AMP + diphosphate. This chain is Glycine--tRNA ligase beta subunit, found in Shewanella baltica (strain OS185).